Consider the following 317-residue polypeptide: Pantothenate kinase (317 aa).

99 to 106 (GSVSVGKS) provides a ligand contact to ATP.

Belongs to the prokaryotic pantothenate kinase family.

It is found in the cytoplasm. It carries out the reaction (R)-pantothenate + ATP = (R)-4'-phosphopantothenate + ADP + H(+). It functions in the pathway cofactor biosynthesis; coenzyme A biosynthesis; CoA from (R)-pantothenate: step 1/5. This is Pantothenate kinase from Histophilus somni (strain 2336) (Haemophilus somnus).